The primary structure comprises 177 residues: MSRIGKKPVVVPDGVDLKINGTVVTAKGKLGELTRQFHEAITFAQEGKEVNVAVSGTDKKSSSLWGLSRTLLDNMVVGVSQGFSKQLEIQGVGYRAAVKGRTLELSLGFSHPVNYELPNGLEATVEKNTLITVKGYDKEVLGQACAEIRSWRPPEPYKGKGVRYVGEFVLRKEGKKK.

This sequence belongs to the universal ribosomal protein uL6 family. Part of the 50S ribosomal subunit.

This protein binds to the 23S rRNA, and is important in its secondary structure. It is located near the subunit interface in the base of the L7/L12 stalk, and near the tRNA binding site of the peptidyltransferase center. This Magnetococcus marinus (strain ATCC BAA-1437 / JCM 17883 / MC-1) protein is Large ribosomal subunit protein uL6.